The sequence spans 184 residues: Photosystem I assembly protein Ycf4 (184 aa).

The next 2 membrane-spanning stretches (helical) occupy residues 19–39 (ISNFCWACILFLGSLGFLLVG) and 57–77 (IIFFPQGIVMSFYGIAGLFIS).

Belongs to the Ycf4 family.

It is found in the plastid. It localises to the chloroplast thylakoid membrane. Its function is as follows. Seems to be required for the assembly of the photosystem I complex. The chain is Photosystem I assembly protein Ycf4 from Drimys granadensis.